The sequence spans 592 residues: V-type ATP synthase alpha chain (592 aa).

233-240 is an ATP binding site; sequence GPFGSGKT.

This sequence belongs to the ATPase alpha/beta chains family.

The enzyme catalyses ATP + H2O + 4 H(+)(in) = ADP + phosphate + 5 H(+)(out). Its function is as follows. Produces ATP from ADP in the presence of a proton gradient across the membrane. The V-type alpha chain is a catalytic subunit. The protein is V-type ATP synthase alpha chain of Clostridium botulinum (strain Loch Maree / Type A3).